The chain runs to 707 residues: E3 ubiquitin-protein ligase Praja-2 (707 aa).

Basic and acidic residues predominate over residues 1 to 10; sequence MSQYTEKEPS. Disordered stretches follow at residues 1–23, 75–120, and 242–290; these read MSQYTEKEPSVMDQDSSKAAWPR, NTAG…PSVA, and AGDA…CVPG. An N-acetylserine modification is found at S2. Over residues 109 to 119 the composition is skewed to polar residues; that stretch reads LNQSTESNPSV. The segment covering 246–276 has biased composition (basic and acidic residues); the sequence is EAVHQDGQEFQRSSEDGIVRKRRQDDTDQGR. S306 and S320 each carry phosphoserine. S339 carries the post-translational modification Phosphoserine; by PKA. Disordered regions lie at residues 380–403 and 424–493; these read VTPREAERHRATAENGATASGRQE and EDSS…QTSL. Basic and acidic residues predominate over residues 381-391; that stretch reads TPREAERHRAT. At S430 the chain carries Phosphoserine. Residues 465–481 show a composition bias toward acidic residues; sequence NEPELQSDSSGPEEENQ. Positions 482 to 491 are enriched in polar residues; it reads ELSLQEGEQT. Positions 530-707 are interaction with PRKAR1A, PRKAR2A and PRKAR2B; that stretch reads DGNNNLEDDS…PANDNAEEAP (178 aa). Residues 549–569 form a mediates interaction with TBC1D31 region; the sequence is WSLFDGFADGLGVAEAISYVD. An RING-type; atypical zinc finger spans residues 633–674; sequence CPICCSEYIKDDIATELPCHHFFHKPCVSIWLQKSGTCPVCR. The interval 686 to 707 is disordered; sequence AAASSEPDLDASPANDNAEEAP.

In terms of assembly, binds ubiquitin-conjugating enzymes (E2s). In vitro, interacts with the ubiquitin-conjugating enzyme, UBE2D2. The phosphorylated form interacts with PRKAR1A, PRKAR2A and PRKAR2B. Binds the catalytic subunits of cAMP-dependent protein kinase. Interacts with MFHAS1. Interacts with TBC1D31; the interaction is direct and recruits PJA2 to centrosomes. As to expression, highly expressed in the brain, in nerve cells but not in glial cells. Abundantly expressed in pyramidal neurons and in the CA3 region of apical dendrites. Colocalizes with PRKAR2B in dentate granule cells and at postsynaptic sites of primary hippocampal neurons.

Its subcellular location is the cytoplasm. It is found in the cell membrane. The protein resides in the endoplasmic reticulum membrane. It localises to the golgi apparatus membrane. The protein localises to the synapse. Its subcellular location is the postsynaptic density. It is found in the cytoskeleton. The protein resides in the microtubule organizing center. It localises to the centrosome. It catalyses the reaction S-ubiquitinyl-[E2 ubiquitin-conjugating enzyme]-L-cysteine + [acceptor protein]-L-lysine = [E2 ubiquitin-conjugating enzyme]-L-cysteine + N(6)-ubiquitinyl-[acceptor protein]-L-lysine.. It participates in protein modification; protein ubiquitination. In terms of biological role, has E2-dependent E3 ubiquitin-protein ligase activity. Responsible for ubiquitination of cAMP-dependent protein kinase type I and type II-alpha/beta regulatory subunits and for targeting them for proteasomal degradation. Essential for PKA-mediated long-term memory processes. Through the ubiquitination of MFHAS1, positively regulates the TLR2 signaling pathway that leads to the activation of the downstream p38 and JNK MAP kinases and promotes the polarization of macrophages toward the pro-inflammatory M1 phenotype. Plays a role in ciliogenesis by ubiquitinating OFD1. The chain is E3 ubiquitin-protein ligase Praja-2 (Pja2) from Rattus norvegicus (Rat).